A 344-amino-acid polypeptide reads, in one-letter code: Lipase chaperone (344 aa).

Residues 13-35 traverse the membrane as a helical segment; that stretch reads RIAPYGAAGLAAIVGVAIWSGTG.

It belongs to the lipase chaperone family.

Its subcellular location is the cell inner membrane. In terms of biological role, may be involved in the folding of the extracellular lipase during its passage through the periplasm. This is Lipase chaperone from Burkholderia vietnamiensis (strain G4 / LMG 22486) (Burkholderia cepacia (strain R1808)).